A 287-amino-acid polypeptide reads, in one-letter code: Pyridoxal kinase PdxY (287 aa).

Substrate contacts are provided by residues Ser-10 and 45 to 46 (TQ). Residues Asp-112, Ala-144, Glu-149, Lys-182, and 209–212 (RPLV) each bind ATP. Asp-224 is a substrate binding site.

This sequence belongs to the pyridoxine kinase family. PdxY subfamily. Homodimer. Mg(2+) serves as cofactor.

The catalysed reaction is pyridoxal + ATP = pyridoxal 5'-phosphate + ADP + H(+). It participates in cofactor metabolism; pyridoxal 5'-phosphate salvage; pyridoxal 5'-phosphate from pyridoxal: step 1/1. Pyridoxal kinase involved in the salvage pathway of pyridoxal 5'-phosphate (PLP). Catalyzes the phosphorylation of pyridoxal to PLP. The sequence is that of Pyridoxal kinase PdxY from Shigella boydii serotype 4 (strain Sb227).